The chain runs to 342 residues: NADPH-dependent methylglyoxal reductase GRE2 (342 aa).

Residues 7-12 (GANGFI), Arg-32, Lys-36, 57-58 (DI), Tyr-165, Lys-169, Val-199, and Ser-216 contribute to the NADP(+) site. The Proton donor role is filled by Lys-169. Position 333 is a phosphoserine (Ser-333).

It belongs to the NAD(P)-dependent epimerase/dehydratase family. Dihydroflavonol-4-reductase subfamily. As to quaternary structure, monomer. The N-terminus is blocked.

It localises to the cytoplasm. The protein resides in the nucleus. The catalysed reaction is (S)-lactaldehyde + NADP(+) = methylglyoxal + NADPH + H(+). It catalyses the reaction 3-methylbutanol + NADP(+) = 3-methylbutanal + NADPH + H(+). It carries out the reaction 2,5-hexanedione + 2 NADPH + 2 H(+) = (2S,5S)-hexanediol + 2 NADP(+). The enzyme catalyses (S)-3-chloro-1-phenyl-1-propanol + NADP(+) = 3-chloro-1-phenyl-1-propanone + NADPH + H(+). Its activity is regulated as follows. Activated by glutathione. Functionally, catalyzes the irreversible reduction of the cytotoxic compound methylglyoxal (MG, 2-oxopropanal) to (S)-lactaldehyde as an alternative to detoxification of MG by glyoxalase I GLO1. MG is synthesized via a bypath of glycolysis from dihydroxyacetone phosphate and is believed to play a role in cell cycle regulation and stress adaptation. Also catalyzes the reduction of 3-methylbutanal to 3-methylbutanol. Acts as a suppressor of 3-methylbutanol-induced filamentation by modulating the levels of 3-methylbutanal, the signal to which cells respond by filamentation. Also involved in ergosterol metabolism. The protein is NADPH-dependent methylglyoxal reductase GRE2 (GRE2) of Saccharomyces cerevisiae (strain ATCC 204508 / S288c) (Baker's yeast).